A 260-amino-acid polypeptide reads, in one-letter code: Hemin import ATP-binding protein HmuV (260 aa).

In terms of domain architecture, ABC transporter spans 6-242; it reads LSGRNISMKY…ERIEQVYGYR (237 aa). Position 38–45 (38–45) interacts with ATP; that stretch reads GPNGAGKS.

The protein belongs to the ABC transporter superfamily. Heme (hemin) importer (TC 3.A.1.14.5) family. In terms of assembly, the complex is composed of two ATP-binding proteins (HmuV), two transmembrane proteins (HmuU) and a solute-binding protein (HmuT).

The protein resides in the cell inner membrane. Functionally, part of the ABC transporter complex HmuTUV involved in hemin import. Responsible for energy coupling to the transport system. This Vibrio parahaemolyticus serotype O3:K6 (strain RIMD 2210633) protein is Hemin import ATP-binding protein HmuV.